A 298-amino-acid chain; its full sequence is 4-hydroxy-tetrahydrodipicolinate synthase (298 aa).

Residue Thr-51 participates in pyruvate binding. Tyr-139 (proton donor/acceptor) is an active-site residue. The active-site Schiff-base intermediate with substrate is Lys-167. Ile-209 provides a ligand contact to pyruvate.

It belongs to the DapA family. Homotetramer; dimer of dimers.

The protein resides in the cytoplasm. It carries out the reaction L-aspartate 4-semialdehyde + pyruvate = (2S,4S)-4-hydroxy-2,3,4,5-tetrahydrodipicolinate + H2O + H(+). It participates in amino-acid biosynthesis; L-lysine biosynthesis via DAP pathway; (S)-tetrahydrodipicolinate from L-aspartate: step 3/4. Catalyzes the condensation of (S)-aspartate-beta-semialdehyde [(S)-ASA] and pyruvate to 4-hydroxy-tetrahydrodipicolinate (HTPA). This Histophilus somni (strain 2336) (Haemophilus somnus) protein is 4-hydroxy-tetrahydrodipicolinate synthase.